The primary structure comprises 1113 residues: uncharacterized protein (1113 aa).

ATP is bound at residue 313 to 320 (GPPGTGKS).

The protein belongs to the DNA2/NAM7 helicase family.

This is an uncharacterized protein from Mycoplasma pneumoniae (strain ATCC 29342 / M129 / Subtype 1) (Mycoplasmoides pneumoniae).